The primary structure comprises 153 residues: Arginine repressor (153 aa).

The protein belongs to the ArgR family.

Its subcellular location is the cytoplasm. Its pathway is amino-acid biosynthesis; L-arginine biosynthesis [regulation]. Its function is as follows. Regulates arginine biosynthesis genes. This Clostridium tetani (strain Massachusetts / E88) protein is Arginine repressor.